A 207-amino-acid chain; its full sequence is Ribosome maturation factor RimP (207 aa).

Belongs to the RimP family.

The protein localises to the cytoplasm. Functionally, required for maturation of 30S ribosomal subunits. This chain is Ribosome maturation factor RimP, found in Parvibaculum lavamentivorans (strain DS-1 / DSM 13023 / NCIMB 13966).